Here is a 206-residue protein sequence, read N- to C-terminus: Peptidyl-tRNA hydrolase (206 aa).

Tyr-19 is a binding site for tRNA. The Proton acceptor role is filled by His-24. Positions 70, 72, and 118 each coordinate tRNA.

The protein belongs to the PTH family. As to quaternary structure, monomer.

The protein resides in the cytoplasm. The enzyme catalyses an N-acyl-L-alpha-aminoacyl-tRNA + H2O = an N-acyl-L-amino acid + a tRNA + H(+). Hydrolyzes ribosome-free peptidyl-tRNAs (with 1 or more amino acids incorporated), which drop off the ribosome during protein synthesis, or as a result of ribosome stalling. Its function is as follows. Catalyzes the release of premature peptidyl moieties from peptidyl-tRNA molecules trapped in stalled 50S ribosomal subunits, and thus maintains levels of free tRNAs and 50S ribosomes. The polypeptide is Peptidyl-tRNA hydrolase (Prochlorococcus marinus (strain MIT 9313)).